The primary structure comprises 345 residues: Phosphoribosylformylglycinamidine cyclo-ligase (345 aa).

This sequence belongs to the AIR synthase family.

It localises to the cytoplasm. It catalyses the reaction 2-formamido-N(1)-(5-O-phospho-beta-D-ribosyl)acetamidine + ATP = 5-amino-1-(5-phospho-beta-D-ribosyl)imidazole + ADP + phosphate + H(+). The protein operates within purine metabolism; IMP biosynthesis via de novo pathway; 5-amino-1-(5-phospho-D-ribosyl)imidazole from N(2)-formyl-N(1)-(5-phospho-D-ribosyl)glycinamide: step 2/2. The protein is Phosphoribosylformylglycinamidine cyclo-ligase of Anaeromyxobacter sp. (strain K).